The primary structure comprises 718 residues: Methionine--tRNA ligase (718 aa).

A 'HIGH' region motif is present at residues 27 to 37; sequence PYANGQIHIGH. Residues C158, C161, C171, and C174 each contribute to the Zn(2+) site. Residues 348 to 352 carry the 'KMSKS' region motif; it reads KMSKS. K351 contributes to the ATP binding site. A tRNA-binding domain is found at 612–718; that stretch reads DFAKIDLRIA…SGAKPGMRVK (107 aa).

This sequence belongs to the class-I aminoacyl-tRNA synthetase family. MetG type 1 subfamily. As to quaternary structure, homodimer. It depends on Zn(2+) as a cofactor.

Its subcellular location is the cytoplasm. The enzyme catalyses tRNA(Met) + L-methionine + ATP = L-methionyl-tRNA(Met) + AMP + diphosphate. Its function is as follows. Is required not only for elongation of protein synthesis but also for the initiation of all mRNA translation through initiator tRNA(fMet) aminoacylation. The polypeptide is Methionine--tRNA ligase (Burkholderia orbicola (strain AU 1054)).